The chain runs to 88 residues: Small ribosomal subunit protein bS16 (88 aa).

This sequence belongs to the bacterial ribosomal protein bS16 family.

The protein is Small ribosomal subunit protein bS16 of Thermus aquaticus.